The sequence spans 335 residues: Glucan endo-1,3-beta-glucosidase, acidic isoform (335 aa).

A signal peptide spans 1-29 (MARQGVIASMHALALLLGAFAAIPTGVQS). E122 acts as the Proton donor in catalysis. Catalysis depends on E259, which acts as the Nucleophile.

This sequence belongs to the glycosyl hydrolase 17 family. In terms of tissue distribution, accumulates in aleurone layers. Much lower levels are found in the embryo, and none in starchy endosperm.

It localises to the secreted. Its subcellular location is the extracellular space. The enzyme catalyses Hydrolysis of (1-&gt;3)-beta-D-glucosidic linkages in (1-&gt;3)-beta-D-glucans.. Its function is as follows. Is thought to be an important plant defense-related product against fungal pathogens. The protein is Glucan endo-1,3-beta-glucosidase, acidic isoform of Zea mays (Maize).